A 346-amino-acid chain; its full sequence is MKFLDQVKIYVRSGNGGAGAVSFRREKYIEYGGPDGGDGGRGGDVWIEAVEGLNTLIDYRYQQHFKAGTGVHGMGRNRHGAAGEDVVLKVPVGTEVLDEDKNLIVDMDEAGKRYLLAKGGNGGFGNTHFKGPVNQAPRHANPGLPGEERAIWLRLKLIADVGLVGLPNAGKSTFLAAASAAKPKIADYPFTTLAPNLGVVDLSVGERFVLADIPGLIEGAHEGAGIGTRFLGHIERTAVLIHLVDGTQEDIVGAWRTVRHELEAYGADLADKPEILALNKIDALDEETRAEKQAQLAEAAGMDVRLVSGFTGENVTELLREAFALVRERKRAAAEEAAGPSEGWTP.

Positions 1 to 158 (MKFLDQVKIY…RAIWLRLKLI (158 aa)) constitute an Obg domain. In terms of domain architecture, OBG-type G spans 159–327 (ADVGLVGLPN…LLREAFALVR (169 aa)). Residues 165–172 (GLPNAGKS), 190–194 (FTTLA), 212–215 (DIPG), 279–282 (NKID), and 308–310 (SGF) contribute to the GTP site. Positions 172 and 192 each coordinate Mg(2+).

Belongs to the TRAFAC class OBG-HflX-like GTPase superfamily. OBG GTPase family. In terms of assembly, monomer. The cofactor is Mg(2+).

It is found in the cytoplasm. Functionally, an essential GTPase which binds GTP, GDP and possibly (p)ppGpp with moderate affinity, with high nucleotide exchange rates and a fairly low GTP hydrolysis rate. Plays a role in control of the cell cycle, stress response, ribosome biogenesis and in those bacteria that undergo differentiation, in morphogenesis control. The chain is GTPase Obg from Phenylobacterium zucineum (strain HLK1).